We begin with the raw amino-acid sequence, 430 residues long: Centrosomal protein CEP57L1 (430 aa).

At Ser45 the chain carries Phosphoserine. Residues 46–213 (PNNQALVSAL…HQRRLFQDRA (168 aa)) are a coiled coil. Disordered regions lie at residues 248 to 290 (CLKR…GEPF) and 362 to 430 (RKLQ…KWEQ). Composition is skewed to basic and acidic residues over residues 249-272 (LKRE…ERPP), 362-372 (RKLQEKVENSR), and 421-430 (LRRDDVKWEQ). The stretch at 290 to 377 (FSICDNLSEL…VENSRINESS (88 aa)) forms a coiled coil.

Belongs to the translokin family.

It is found in the cytoplasm. Its subcellular location is the cytoskeleton. It localises to the microtubule organizing center. The protein localises to the centrosome. Centrosomal protein which may be required for microtubule attachment to centrosomes. The polypeptide is Centrosomal protein CEP57L1 (Cep57l1) (Rattus norvegicus (Rat)).